A 177-amino-acid polypeptide reads, in one-letter code: Large ribosomal subunit protein uL6 (177 aa).

It belongs to the universal ribosomal protein uL6 family. Part of the 50S ribosomal subunit.

Its function is as follows. This protein binds to the 23S rRNA, and is important in its secondary structure. It is located near the subunit interface in the base of the L7/L12 stalk, and near the tRNA binding site of the peptidyltransferase center. The sequence is that of Large ribosomal subunit protein uL6 from Cronobacter sakazakii (strain ATCC BAA-894) (Enterobacter sakazakii).